Consider the following 530-residue polypeptide: Ubiquitin carboxyl-terminal hydrolase 17-like protein 22 (530 aa).

Positions Ala-80–Lys-375 constitute a USP domain. The Nucleophile role is filled by Cys-89. His-334 functions as the Proton acceptor in the catalytic mechanism. Basic and acidic residues-rich tracts occupy residues Ser-382–Arg-392 and Asp-398–His-412. 2 disordered regions span residues Ser-382–His-412 and Lys-476–Gln-530. Over residues Ser-484–Thr-495 the composition is skewed to low complexity. Positions His-496–Leu-505 are enriched in polar residues. Over residues Gly-510–Arg-524 the composition is skewed to basic residues.

The protein belongs to the peptidase C19 family. USP17 subfamily.

The protein localises to the nucleus. The protein resides in the endoplasmic reticulum. It catalyses the reaction Thiol-dependent hydrolysis of ester, thioester, amide, peptide and isopeptide bonds formed by the C-terminal Gly of ubiquitin (a 76-residue protein attached to proteins as an intracellular targeting signal).. In terms of biological role, deubiquitinating enzyme that removes conjugated ubiquitin from specific proteins to regulate different cellular processes that may include cell proliferation, progression through the cell cycle, apoptosis, cell migration, and the cellular response to viral infection. This is Ubiquitin carboxyl-terminal hydrolase 17-like protein 22 (USP17L22) from Homo sapiens (Human).